The sequence spans 2548 residues: Variant-silencing SET domain-containing protein (2548 aa).

Over residues 37-48 the composition is skewed to acidic residues; it reads IDDDDDDDNDNN. Disordered stretches follow at residues 37–61, 336–379, and 585–629; these read IDDD…KTNN, GDPK…DDDN, and SVDR…NTQT. Residues 336–357 are compositionally biased toward basic and acidic residues; sequence GDPKKRIERNKQEIEDHRREQD. Over residues 358–378 the composition is skewed to acidic residues; the sequence is GENDQEEDNYDDYDDEDDDDD. Low complexity predominate over residues 602-616; that stretch reads NGSNNNNSSSNNNNN. Residues 617 to 629 show a composition bias toward polar residues; that stretch reads ITHITNDCDNTQT. The segment at 787–846 adopts a PHD-type 1 zinc-finger fold; sequence FYLCEFCEQNIFDMNNMIKKDKAKECMYRCNISCGRTFHKACVCYIKNNDNYICFFCLYD. A compositionally biased stretch (basic residues) spans 929–944; that stretch reads IKRRHIYRKRRRRGPR. 4 disordered regions span residues 929 to 1054, 1546 to 1575, 1713 to 1732, and 1772 to 1822; these read IKRR…CDEN, EKNT…NTLD, EQGS…NNAK, and INNA…DDHR. Residues 986 to 1016 are compositionally biased toward acidic residues; the sequence is DNNDDNNDNNDDNNDNNDDNNDNNDNNDDNN. Composition is skewed to low complexity over residues 1017–1050 and 1551–1572; these read NDNN…NNNN and NKLC…TKYN. Residues 1714–1732 are compositionally biased toward polar residues; that stretch reads QGSINNAKHNEQGSINNAK. The region spanning 2067–2117 is the AWS domain; it reads SDDYKCLCQGECNLYTCYNSLSNIQCSKSRCNLPEKIQDRKCFNRPFRKSF. The region spanning 2119–2240 is the SET domain; it reads KDLEIKKTEK…SGEEITYNYS (122 aa). Tyr-2239 lines the S-adenosyl-L-methionine pocket. The PHD-type 2 zinc finger occupies 2423-2471; it reads DEVCRKCKSCGNLTMCDKCFQSYHQLCGNMHSKMYKNNELVLCRFCQKY.

Belongs to the class V-like SAM-binding methyltransferase superfamily.

It localises to the nucleus. The protein resides in the chromosome. The catalysed reaction is L-lysyl(36)-[histone H3] + 3 S-adenosyl-L-methionine = N(6),N(6),N(6)-trimethyl-L-lysyl(36)-[histone H3] + 3 S-adenosyl-L-homocysteine + 3 H(+). Functionally, histone methyltransferase that specifically represses expression of the surface antigen-coding var genes by mediating trimethylation of 'Lys-36' of histone H3 (H3K36me3) on var genes. SETVS-dependent H3K36me3 is specifically involved in var genes silencing, a central step malaria pathogenesis: each parasite contains 60 distinct var genes that each code for a different PfEMP1 protein. During infection, the clonal parasite population expresses only 1 gene at a time, while the 59 other var genes are silenced. The parasite then switches to the expression of a new variant antigen as an immune-evasion mechanism to avoid the host antibody response. Represses expression of both var mRNA and antisense long non-coding RNA. The protein is Variant-silencing SET domain-containing protein (SETVS) of Plasmodium falciparum (isolate 3D7).